Here is a 97-residue protein sequence, read N- to C-terminus: MTDLRHYDVIVSPVITEKSTMVSEHNQVVFNVARKATKPEIKAAVEALFGVKVTAVNTAVRKGKVKRFRGLVGRQSDVKKAIVTLAEGQSIDVSTGL.

The protein belongs to the universal ribosomal protein uL23 family. In terms of assembly, part of the 50S ribosomal subunit. Contacts protein L29, and trigger factor when it is bound to the ribosome.

In terms of biological role, one of the early assembly proteins it binds 23S rRNA. One of the proteins that surrounds the polypeptide exit tunnel on the outside of the ribosome. Forms the main docking site for trigger factor binding to the ribosome. The chain is Large ribosomal subunit protein uL23 from Brucella canis (strain ATCC 23365 / NCTC 10854 / RM-666).